We begin with the raw amino-acid sequence, 99 residues long: uncharacterized protein (99 aa).

The protein belongs to the HesB/IscA family.

This is an uncharacterized protein from Staphylococcus haemolyticus (strain JCSC1435).